The chain runs to 328 residues: Stress response kinase A (328 aa).

Residue D201 is the Proton acceptor of the active site. 2 residues coordinate Mg(2+): N206 and D217. Residue D217 is part of the active site.

It belongs to the SrkA/RdoA protein kinase family. Monomer. Mg(2+) is required as a cofactor.

It is found in the cytoplasm. It carries out the reaction L-seryl-[protein] + ATP = O-phospho-L-seryl-[protein] + ADP + H(+). It catalyses the reaction L-threonyl-[protein] + ATP = O-phospho-L-threonyl-[protein] + ADP + H(+). In terms of biological role, a protein kinase that phosphorylates Ser and Thr residues. Probably acts to suppress the effects of stress linked to accumulation of reactive oxygen species. Probably involved in the extracytoplasmic stress response. The polypeptide is Stress response kinase A (Escherichia coli O157:H7).